Here is a 368-residue protein sequence, read N- to C-terminus: GDP-fucose transporter 1 (368 aa).

Helical transmembrane passes span 64–84 (LSTI…LVFL), 98–118 (LFIT…MTSI), 141–161 (VLPV…CLEY), 166–186 (FYQV…YIVL), 195–215 (TMAC…EVNF), 217–237 (WLGI…SIAV), 251–271 (LSIY…LVSG), 287–307 (FWFY…SVFM), and 332–352 (AVVF…LLVI).

The protein belongs to the TPT transporter family. SLC35C subfamily.

The protein resides in the golgi apparatus membrane. It catalyses the reaction GMP(out) + GDP-beta-L-fucose(in) = GMP(in) + GDP-beta-L-fucose(out). Functionally, antiporter specific for GDP-l-fucose and depending on the concomitant reverse transport of GMP. Involved in GDP-fucose import from the cytoplasm into the Golgi lumen. This is GDP-fucose transporter 1 (slc35c1) from Dictyostelium discoideum (Social amoeba).